We begin with the raw amino-acid sequence, 252 residues long: Carbonic anhydrase (252 aa).

A signal peptide spans 1–26; the sequence is MPRFPRTLPRLTAVLLLACTAFSAAA. An Alpha-carbonic anhydrase domain is found at 31–252; the sequence is THWGYTGHDS…QPLNARVVIE (222 aa). Cysteines 54 and 207 form a disulfide. The active-site Proton acceptor is the His-92. Positions 118, 120, and 137 each coordinate Zn(2+). 203–204 contacts substrate; the sequence is TT.

It belongs to the alpha-carbonic anhydrase family. As to quaternary structure, homodimer. Zn(2+) serves as cofactor.

Its subcellular location is the periplasm. The catalysed reaction is hydrogencarbonate + H(+) = CO2 + H2O. Reversible hydration of carbon dioxide. The chain is Carbonic anhydrase (cah) from Neisseria gonorrhoeae.